We begin with the raw amino-acid sequence, 163 residues long: UPF0763 protein JJD26997_0796 (163 aa).

This sequence belongs to the UPF0763 family.

In Campylobacter jejuni subsp. doylei (strain ATCC BAA-1458 / RM4099 / 269.97), this protein is UPF0763 protein JJD26997_0796.